Here is a 202-residue protein sequence, read N- to C-terminus: ATP-dependent Clp protease proteolytic subunit 1 (202 aa).

Catalysis depends on Ser102, which acts as the Nucleophile. The active site involves His127.

This sequence belongs to the peptidase S14 family. Fourteen ClpP subunits assemble into 2 heptameric rings which stack back to back to give a disk-like structure with a central cavity, resembling the structure of eukaryotic proteasomes.

Its subcellular location is the cytoplasm. The enzyme catalyses Hydrolysis of proteins to small peptides in the presence of ATP and magnesium. alpha-casein is the usual test substrate. In the absence of ATP, only oligopeptides shorter than five residues are hydrolyzed (such as succinyl-Leu-Tyr-|-NHMec, and Leu-Tyr-Leu-|-Tyr-Trp, in which cleavage of the -Tyr-|-Leu- and -Tyr-|-Trp bonds also occurs).. In terms of biological role, cleaves peptides in various proteins in a process that requires ATP hydrolysis. Has a chymotrypsin-like activity. Plays a major role in the degradation of misfolded proteins. This is ATP-dependent Clp protease proteolytic subunit 1 from Agrobacterium fabrum (strain C58 / ATCC 33970) (Agrobacterium tumefaciens (strain C58)).